A 185-amino-acid chain; its full sequence is Ribosome-recycling factor (185 aa).

The protein belongs to the RRF family.

It localises to the cytoplasm. Its function is as follows. Responsible for the release of ribosomes from messenger RNA at the termination of protein biosynthesis. May increase the efficiency of translation by recycling ribosomes from one round of translation to another. The polypeptide is Ribosome-recycling factor (Neorickettsia sennetsu (strain ATCC VR-367 / Miyayama) (Ehrlichia sennetsu)).